We begin with the raw amino-acid sequence, 177 residues long: ATP synthase subunit delta (177 aa).

This sequence belongs to the ATPase delta chain family. As to quaternary structure, F-type ATPases have 2 components, F(1) - the catalytic core - and F(0) - the membrane proton channel. F(1) has five subunits: alpha(3), beta(3), gamma(1), delta(1), epsilon(1). F(0) has three main subunits: a(1), b(2) and c(10-14). The alpha and beta chains form an alternating ring which encloses part of the gamma chain. F(1) is attached to F(0) by a central stalk formed by the gamma and epsilon chains, while a peripheral stalk is formed by the delta and b chains.

The protein localises to the cell inner membrane. Functionally, f(1)F(0) ATP synthase produces ATP from ADP in the presence of a proton or sodium gradient. F-type ATPases consist of two structural domains, F(1) containing the extramembraneous catalytic core and F(0) containing the membrane proton channel, linked together by a central stalk and a peripheral stalk. During catalysis, ATP synthesis in the catalytic domain of F(1) is coupled via a rotary mechanism of the central stalk subunits to proton translocation. This protein is part of the stalk that links CF(0) to CF(1). It either transmits conformational changes from CF(0) to CF(1) or is implicated in proton conduction. This chain is ATP synthase subunit delta, found in Neisseria gonorrhoeae (strain ATCC 700825 / FA 1090).